The following is a 77-amino-acid chain: Bradykinin-potentiating peptide (77 aa).

A signal peptide spans methionine 1–serine 22. A propeptide spanning residues arginine 74–arginine 77 is cleaved from the precursor.

Belongs to the non-disulfide-bridged peptide (NDBP) superfamily. Long chain multifunctional peptide (group 2) family. In terms of tissue distribution, expressed by the venom gland.

It localises to the secreted. Its function is as follows. Antimicrobial peptide. May also inhibit angiotensin-converting enzyme (ACE) and potentiate bradykinin (BK). This Tityus discrepans (Venezuelan scorpion) protein is Bradykinin-potentiating peptide.